A 225-amino-acid chain; its full sequence is Ribose-5-phosphate isomerase A (225 aa).

Residues 33–36 (TGST), 84–87 (DGAD), and 96–99 (KGGG) each bind substrate. Glu105 (proton acceptor) is an active-site residue. Lys123 serves as a coordination point for substrate.

Belongs to the ribose 5-phosphate isomerase family. Homodimer.

It catalyses the reaction aldehydo-D-ribose 5-phosphate = D-ribulose 5-phosphate. It participates in carbohydrate degradation; pentose phosphate pathway; D-ribose 5-phosphate from D-ribulose 5-phosphate (non-oxidative stage): step 1/1. Catalyzes the reversible conversion of ribose-5-phosphate to ribulose 5-phosphate. The polypeptide is Ribose-5-phosphate isomerase A (Halobacterium salinarum (strain ATCC 29341 / DSM 671 / R1)).